We begin with the raw amino-acid sequence, 71 residues long: Potassium voltage-gated channel subfamily E member 2 (71 aa).

The helical transmembrane segment at 7 to 27 (VILYLMVMIGMFSFIIVAILV) threads the bilayer. Residues 28–71 (STVKSKRREHSNDPYHQYIVEDWQEKYKSQILHFEEAKATIHEN) lie on the Cytoplasmic side of the membrane.

The protein belongs to the potassium channel KCNE family. Interacts with KCNB1. Associates with KCNH2/ERG1. May associate with KCNQ2 and KCNQ3. Associates with HCN1 and probably HCN2. Heteromultimer with KCNC2. Interacts with KCNC2. Interacts with KCNQ1; forms a heterooligomer complex that targets to the membrane raft and leading to currents with an apparently instantaneous activation, a rapid deactivation process and a linear current-voltage relationship and decreases the amplitude of the outward current. In terms of tissue distribution, detected in heart; expression is highest in the SA node and the right atrium, and barely detectable in the ventricle.

It is found in the cell membrane. It localises to the apical cell membrane. Ancillary protein that functions as a regulatory subunit of the voltage-gated potassium (Kv) channel complex composed of pore-forming and potassium-conducting alpha subunits and of regulatory beta subunits. KCNE2 beta subunit modulates the gating kinetics and enhances stability of the channel complex. Alters the gating of the delayed rectifier Kv channel containing KCNB1 alpha subunit. Associates with KCNH2/HERG alpha subunit Kv channel to form the rapidly activating component of the delayed rectifying potassium current (IKr) in heart. May associate with KCNQ2 and/or KCNQ3 alpha subunits to modulate the native M-type current. May associate with HCN1 and HCN2 channel subunits to increase potassium current. Forms a heterooligomer complex with KCNQ1/KVLQT1 alpha subunits which leads to currents with an apparently instantaneous activation, a rapid deactivation process and a linear current-voltage relationship and decreases the amplitude of the outward current. KCNQ1-KCNE2 channel associates with Na(+)-coupled myo-inositol symporter in the apical membrane of choroid plexus epithelium and regulates the myo-inositol gradient between blood and cerebrospinal fluid with an impact on neuron excitability. This chain is Potassium voltage-gated channel subfamily E member 2 (KCNE2), found in Oryctolagus cuniculus (Rabbit).